A 555-amino-acid chain; its full sequence is Phosphomethylpyrimidine synthase (555 aa).

Residues asparagine 191, methionine 220, tyrosine 249, histidine 285, serine 305–glycine 307, aspartate 346–arginine 349, and glutamate 385 contribute to the substrate site. Histidine 389 serves as a coordination point for Zn(2+). Tyrosine 412 lines the substrate pocket. Histidine 453 provides a ligand contact to Zn(2+). [4Fe-4S] cluster-binding residues include cysteine 533, cysteine 536, and cysteine 541.

This sequence belongs to the ThiC family. In terms of assembly, homodimer. [4Fe-4S] cluster serves as cofactor.

It catalyses the reaction 5-amino-1-(5-phospho-beta-D-ribosyl)imidazole + S-adenosyl-L-methionine = 4-amino-2-methyl-5-(phosphooxymethyl)pyrimidine + CO + 5'-deoxyadenosine + formate + L-methionine + 3 H(+). It participates in cofactor biosynthesis; thiamine diphosphate biosynthesis. Its function is as follows. Catalyzes the synthesis of the hydroxymethylpyrimidine phosphate (HMP-P) moiety of thiamine from aminoimidazole ribotide (AIR) in a radical S-adenosyl-L-methionine (SAM)-dependent reaction. The protein is Phosphomethylpyrimidine synthase of Ehrlichia ruminantium (strain Gardel).